The primary structure comprises 633 residues: Leucine-rich repeat and IQ domain-containing protein 3 (633 aa).

LRR repeat units follow at residues S51–K72, K73–N94, and N98–S119. The 48-residue stretch at C132–Q179 folds into the LRRCT domain. Residues H215–H244 form the IQ domain. The segment at N322–D343 is disordered. A coiled-coil region spans residues E556–Y616.

This is Leucine-rich repeat and IQ domain-containing protein 3 (Lrriq3) from Rattus norvegicus (Rat).